Here is a 1030-residue protein sequence, read N- to C-terminus: Kinesin-related protein 6 (1030 aa).

The region spanning 3–66 is the SAM domain; it reads FENDQLYNWL…FHLLQQLKKQ (64 aa). 2 disordered regions span residues 66 to 164 and 178 to 308; these read QTPP…SDFM and RQQY…EDDD. The segment covering 68 to 80 has biased composition (polar residues); sequence PPISNTSSPVINS. Low complexity-rich tracts occupy residues 81–117, 125–164, 181–197, and 225–238; these read NNNN…NNNN, TSTS…SDFM, YAKQ…KYQS, and QQQQ…QQQD. The segment covering 239–290 has biased composition (acidic residues); sequence FEFEEEEEEEDQQQQYDEEEEEEEEYEEDFYKEDLGEIDDGNVLDISDDEPD. Positions 453–775 constitute a Kinesin motor domain; it reads RIRVCVRKRP…LRYADRVKEL (323 aa). 543–550 contributes to the ATP binding site; sequence GQTGSGKT. 3 stretches are compositionally biased toward low complexity: residues 826 to 839, 849 to 906, and 981 to 1009; these read INSQ…TSQP, QQQE…QTQP, and PIQQ…QTPQ. Disordered stretches follow at residues 826–915 and 981–1030; these read INSQ…KIDF and PIQQ…SSRN.

The protein belongs to the TRAFAC class myosin-kinesin ATPase superfamily. Kinesin family.

It localises to the cytoplasm. Its subcellular location is the cytoskeleton. In terms of biological role, microtubule-associated force-producing protein that plays a role in organelle transport. Its motor activity is directed toward the microtubule's plus end. This Dictyostelium discoideum (Social amoeba) protein is Kinesin-related protein 6 (kif6).